Consider the following 75-residue polypeptide: MSQYSQNQYAGAYPTPPVSTGPYVAPPPLGYPTNDTTHATVAPVETKSKGEAADGFLKGCLATMLACCVLDACIF.

The interval 1-29 (MSQYSQNQYAGAYPTPPVSTGPYVAPPPL) is disordered. A compositionally biased stretch (pro residues) spans 14–29 (PTPPVSTGPYVAPPPL). Residues 52–69 (AADGFLKGCLATMLACCV) form a helical membrane-spanning segment.

It belongs to the CYSTM1 family. In terms of assembly, heterodimers. Interacts with CYSTM7 and WIH1/CYSTM13. In terms of tissue distribution, mostly expressed in roots, stems, rosette leaves and siliques and, to a lower extent, in flowers and cauline leaves.

It localises to the cell membrane. The protein localises to the nucleus. Functionally, involved in resistance to abiotic stress. This chain is Protein CYSTEINE-RICH TRANSMEMBRANE MODULE 5, found in Arabidopsis thaliana (Mouse-ear cress).